The sequence spans 73 residues: Salivary protein FS48 (73 aa).

The N-terminal stretch at 1-21 (MKFAFAIFVVLAILHTELISA) is a signal peptide.

It localises to the secreted. Salivary protein that inhibits host voltage-gated potassium channels Kv1.1/KCNA1, Kv1.2/KCNA2 and Kv1.3/KCNA3 likely via a voltage-independent pore-blocking mechanism. Suppresses expression of the Kv1.3/KCNA3 channel in lipopolysaccharide (LPS)-stimulated mouse macrophages and human T-cells. Down-regulates secretion of nitric oxide (NO) and inflammatory cytokines, such as TNF-alpha/TNF, IL-1beta/IL1B and IL6, in LPS-stimulated mouse macrophages in a manner dependent on Kv1.3/KCNA3 channel blockage. Reduces activation of MAPK and NF-kappa-B signaling pathways in LPS-stimulated mouse macrophages. Modulates intracellular Ca(2+) signaling in human PMA/ionomycin-triggered T-cells. Interferes with the activation of the MAPK, NF-kappa-B and NFATc1 pathways in human PMA/ionomycin-triggered T-cells. Reduces proliferation of human PMA/ionomycin-triggered T-cells. Down-regulates secretion of cytokines, such as TNF-alpha/TNF and IL2, in human PMA/ionomycin-triggered T-cells. The chain is Salivary protein FS48 from Xenopsylla cheopis (Oriental rat flea).